A 402-amino-acid polypeptide reads, in one-letter code: Plasminogen activator inhibitor 1 (402 aa).

An N-terminal signal peptide occupies residues 1–22 (MQMSSALACLILGLVLVSGKGF). Asn-232, Asn-288, and Asn-352 each carry an N-linked (GlcNAc...) asparagine glycan.

The protein belongs to the serpin family. Forms a heterodimer with TMPRSS7. Interacts with VTN. Binds LRP1B; binding is followed by internalization and degradation. Interacts with PPP1CB. In complex with PLAU/uPA, interacts with PLAUR/uPAR. Interacts with SORL1 and LRP1, either alone or in complex with PLAU; these interactions are abolished in the presence of LRPAP1/RAP. The ternary complex composed of PLAUR-PLAU-PAI1 also interacts with SORL1. Interacts with PLAT/tPA. Also interacts with SORL1, when complexed to PLAT/tPA.

It localises to the secreted. In terms of biological role, serine protease inhibitor. Inhibits TMPRSS7. Is a primary inhibitor of tissue-type plasminogen activator (PLAT) and urokinase-type plasminogen activator (PLAU). As PLAT inhibitor, it is required for fibrinolysis down-regulation and is responsible for the controlled degradation of blood clots. As PLAU inhibitor, it is involved in the regulation of cell adhesion and spreading. Acts as a regulator of cell migration, independently of its role as protease inhibitor. It is required for stimulation of keratinocyte migration during cutaneous injury repair. Involved in cellular and replicative senescence. Plays a role in alveolar type 2 cells senescence in the lung. Is involved in the regulation of cementogenic differentiation of periodontal ligament stem cells, and regulates odontoblast differentiation and dentin formation during odontogenesis. The chain is Plasminogen activator inhibitor 1 (Serpine1) from Mus musculus (Mouse).